Consider the following 295-residue polypeptide: Diaminopimelate epimerase (295 aa).

Asparagine 13 and asparagine 69 together coordinate substrate. Cysteine 78 acts as the Proton donor in catalysis. Substrate-binding positions include 79 to 80 (GN), asparagine 173, asparagine 212, and 230 to 231 (ER). Catalysis depends on cysteine 239, which acts as the Proton acceptor. 240-241 (GT) is a binding site for substrate.

This sequence belongs to the diaminopimelate epimerase family. As to quaternary structure, homodimer.

It localises to the cytoplasm. It carries out the reaction (2S,6S)-2,6-diaminopimelate = meso-2,6-diaminopimelate. The protein operates within amino-acid biosynthesis; L-lysine biosynthesis via DAP pathway; DL-2,6-diaminopimelate from LL-2,6-diaminopimelate: step 1/1. Its function is as follows. Catalyzes the stereoinversion of LL-2,6-diaminopimelate (L,L-DAP) to meso-diaminopimelate (meso-DAP), a precursor of L-lysine. This is Diaminopimelate epimerase from Methanococcus aeolicus (strain ATCC BAA-1280 / DSM 17508 / OCM 812 / Nankai-3).